We begin with the raw amino-acid sequence, 43 residues long: Potassium channel toxin gamma-KTx 4.4 (43 aa).

4 disulfides stabilise this stretch: Cys5/Cys23, Cys11/Cys34, Cys20/Cys39, and Cys24/Cys41.

Belongs to the ergtoxin family. Gamma-KTx 4 subfamily. As to expression, expressed by the venom gland.

Its subcellular location is the secreted. Functionally, reversibly blocks Kv11/ERG potassium channels. In Centruroides exilicauda (Bark scorpion), this protein is Potassium channel toxin gamma-KTx 4.4.